A 236-amino-acid chain; its full sequence is Small ribosomal subunit protein uS3 (236 aa).

A KH type-2 domain is found at 39 to 107 (IREFLTEELK…DTSLNIVEVR (69 aa)). Residues 214-236 (ASERRAVEGDNQGSSSNRRRENA) form a disordered region.

Belongs to the universal ribosomal protein uS3 family. Part of the 30S ribosomal subunit. Forms a tight complex with proteins S10 and S14.

In terms of biological role, binds the lower part of the 30S subunit head. Binds mRNA in the 70S ribosome, positioning it for translation. The sequence is that of Small ribosomal subunit protein uS3 from Brucella melitensis biotype 1 (strain ATCC 23456 / CCUG 17765 / NCTC 10094 / 16M).